A 1282-amino-acid polypeptide reads, in one-letter code: Trafficking protein particle complex subunit 8 (1282 aa).

A disordered region spans residues 245 to 287 (TDAIAPGPNGASNQQSPSSPTSSVATISSTMPAVGSVSPNSHP). Positions 255–273 (ASNQQSPSSPTSSVATISS) are enriched in low complexity.

Its function is as follows. Plays a role in endoplasmic reticulum to Golgi apparatus trafficking at a very early stage. Involved in collagen secretion. The sequence is that of Trafficking protein particle complex subunit 8 from Caenorhabditis elegans.